We begin with the raw amino-acid sequence, 706 residues long: Elongation factor G (706 aa).

Residues 8-295 enclose the tr-type G domain; sequence ERYRNFGIMA…AVIDYLPSPL (288 aa). Residues 17-24, 92-96, and 146-149 each bind GTP; these read AHIDAGKT, DTPGH, and NKMD.

This sequence belongs to the TRAFAC class translation factor GTPase superfamily. Classic translation factor GTPase family. EF-G/EF-2 subfamily.

The protein localises to the cytoplasm. In terms of biological role, catalyzes the GTP-dependent ribosomal translocation step during translation elongation. During this step, the ribosome changes from the pre-translocational (PRE) to the post-translocational (POST) state as the newly formed A-site-bound peptidyl-tRNA and P-site-bound deacylated tRNA move to the P and E sites, respectively. Catalyzes the coordinated movement of the two tRNA molecules, the mRNA and conformational changes in the ribosome. In Jannaschia sp. (strain CCS1), this protein is Elongation factor G.